Reading from the N-terminus, the 311-residue chain is 1,4-dihydroxy-2-naphthoate octaprenyltransferase (311 aa).

9 consecutive transmembrane segments (helical) span residues 31–51, 53–73, 104–126, 131–153, 157–177, 182–202, 220–240, 242–262, and 290–310; these read LTASFVPVLLGTVLAMFYVKV, LLLFLAMLFSCLWIQIATNLF, TILQLALASYGIAILLGVYICAS, LALIGLVGMAIGYLYTGGPLPIA, FGELFSGICMGSVFVLISFFI, INMQSILISIPIAILVGAINL, LAILMGHKGAVTLLAASFAVA, IWVVGLVITGAASPWLFVVFL, and TAQTNTFFGFLLSIGLLISYF.

This sequence belongs to the MenA family. Type 1 subfamily.

The protein localises to the cell membrane. The enzyme catalyses an all-trans-polyprenyl diphosphate + 1,4-dihydroxy-2-naphthoate + H(+) = a 2-demethylmenaquinol + CO2 + diphosphate. The protein operates within quinol/quinone metabolism; menaquinone biosynthesis; menaquinol from 1,4-dihydroxy-2-naphthoate: step 1/2. Conversion of 1,4-dihydroxy-2-naphthoate (DHNA) to demethylmenaquinone (DMK). In Bacillus subtilis (strain 168), this protein is 1,4-dihydroxy-2-naphthoate octaprenyltransferase.